Consider the following 31-residue polypeptide: Cytochrome b6-f complex subunit 6 (31 aa).

The chain crosses the membrane as a helical span at residues I4–S26.

Belongs to the PetL family. The 4 large subunits of the cytochrome b6-f complex are cytochrome b6, subunit IV (17 kDa polypeptide, PetD), cytochrome f and the Rieske protein, while the 4 small subunits are PetG, PetL, PetM and PetN. The complex functions as a dimer.

It is found in the plastid. It localises to the chloroplast thylakoid membrane. Its function is as follows. Component of the cytochrome b6-f complex, which mediates electron transfer between photosystem II (PSII) and photosystem I (PSI), cyclic electron flow around PSI, and state transitions. PetL is important for photoautotrophic growth as well as for electron transfer efficiency and stability of the cytochrome b6-f complex. The protein is Cytochrome b6-f complex subunit 6 of Nymphaea alba (White water-lily).